We begin with the raw amino-acid sequence, 129 residues long: Small ribosomal subunit protein bS6 (129 aa).

Belongs to the bacterial ribosomal protein bS6 family.

Functionally, binds together with bS18 to 16S ribosomal RNA. The polypeptide is Small ribosomal subunit protein bS6 (Pelobacter propionicus (strain DSM 2379 / NBRC 103807 / OttBd1)).